The sequence spans 292 residues: Ribosomal protein L11 methyltransferase (292 aa).

Residues Thr144, Gly165, Asp187, and Asn229 each contribute to the S-adenosyl-L-methionine site.

The protein belongs to the methyltransferase superfamily. PrmA family.

It localises to the cytoplasm. The enzyme catalyses L-lysyl-[protein] + 3 S-adenosyl-L-methionine = N(6),N(6),N(6)-trimethyl-L-lysyl-[protein] + 3 S-adenosyl-L-homocysteine + 3 H(+). In terms of biological role, methylates ribosomal protein L11. This chain is Ribosomal protein L11 methyltransferase, found in Pseudomonas putida (strain ATCC 700007 / DSM 6899 / JCM 31910 / BCRC 17059 / LMG 24140 / F1).